The chain runs to 153 residues: Bacteriohemerythrin (153 aa).

His-21, His-57, Glu-61, His-76, His-80, His-115, and Asp-120 together coordinate Fe cation.

This sequence belongs to the hemerythrin family. In terms of assembly, monomer.

Its function is as follows. Oxygen-binding protein. May be involved in a storage mechanism or for delivery to oxygen-requiring enzymes. The oxygen-binding site contains two iron atoms. The sequence is that of Bacteriohemerythrin from Pseudomonas aeruginosa (strain UCBPP-PA14).